The chain runs to 708 residues: GID complex associated protein 12 (708 aa).

The span at 381–396 (SSRRNSSFSTASSEPR) shows a compositional bias: low complexity. Residues 381–403 (SSRRNSSFSTASSEPRPLSRRRR) form a disordered region.

In terms of assembly, interacts with core components of the GID/CTLH ubiquitin ligase complex. GID12 binds both the substrate receptor GID4 and the tip of GID5 in the scaffolding module, sealing GID4 onto the scaffold.

In terms of biological role, regulator of the GID E3 ligase complex. Modulates both assembly of the substrate receptor GID4 into the GID E3 ligase complex and its activity toward its substrates. GID12-binding remodels the N-degron binding pocket in the GID(SR4) complex, and could limit substrate accessibility of a bulky substrate to a ubiquitynation active site, thereby stabilizing gluconeogenic enzyme substrates. Involved in actin patch formation. This Saccharomyces cerevisiae (strain ATCC 204508 / S288c) (Baker's yeast) protein is GID complex associated protein 12.